Here is a 202-residue protein sequence, read N- to C-terminus: Snake venom metalloproteinase TM-1 (202 aa).

A Pyrrolidone carboxylic acid modification is found at Gln1. In terms of domain architecture, Peptidase M12B spans 7–202 (RYVMLAIVAD…TNPQCILNAP (196 aa)). Cystine bridges form between Cys118–Cys197, Cys159–Cys181, and Cys161–Cys164. Zn(2+) is bound at residue His143. Glu144 is a catalytic residue. Positions 147 and 153 each coordinate Zn(2+).

Belongs to the venom metalloproteinase (M12B) family. P-I subfamily. As to quaternary structure, monomer. The cofactor is Zn(2+). The N-terminus is blocked. Post-translationally, not glycosylated. In terms of tissue distribution, expressed by the venom gland.

The protein resides in the secreted. Inhibited by EDTA and 1,10-phenanthroline. Is also inhibited by endogenous tripeptide inhibitors pyroGlu-Asn-Trp, pyroGlu-Gln-Trp, and pyroGlu-Lys-Trp. In terms of biological role, potent fibrinogenolytic protease which cleaves mainly the Aalpha (FGA) and Bbeta (FGB) chains of fibrinogen and slightly the gamma chain (FGG). Shows preference for substrates having a moderate-size and hydrophobic residue at the P1' position. Preferentially cleaves Ala-|-Leu and Tyr-|-Leu bonds. Is more susceptible to tripeptide inhibitors than TM-3 (AC O57413). The protein is Snake venom metalloproteinase TM-1 of Protobothrops mucrosquamatus (Taiwan habu).